The following is a 257-amino-acid chain: Ethanolamine ammonia-lyase small subunit (257 aa).

Adenosylcob(III)alamin-binding residues include Val153, Glu174, and Cys203.

It belongs to the EutC family. In terms of assembly, the basic unit is a heterodimer which dimerizes to form tetramers. The heterotetramers trimerize; 6 large subunits form a core ring with 6 small subunits projecting outwards. The cofactor is adenosylcob(III)alamin.

It is found in the bacterial microcompartment. The catalysed reaction is ethanolamine = acetaldehyde + NH4(+). It participates in amine and polyamine degradation; ethanolamine degradation. Its function is as follows. Catalyzes the deamination of various vicinal amino-alcohols to oxo compounds. Allows this organism to utilize ethanolamine as the sole source of nitrogen and carbon in the presence of external vitamin B12. In Rhodococcus erythropolis (Arthrobacter picolinophilus), this protein is Ethanolamine ammonia-lyase small subunit.